The chain runs to 260 residues: Circadian clock-controlled protein daywake (260 aa).

Residues 1–25 form the signal peptide; sequence MQLTGASMFLVWVGLLSWVSCRVDA.

The protein belongs to the TO family. In terms of tissue distribution, epidermis of newly eclosed adults.

In terms of biological role, component of the circadian clock or downstream effector of clock function. Required for suppressing daytime sleep (siesta) under ambient environmental temperatures. Part of a heat avoidance mechanism that modulates daytime sleep behavior under different environmental temperatures to minimize the risk of heat exposure. Under cooler ambient temperatures, suppresses daytime sleep (siesta) and thus allows for longer periods of daytime activity. This Drosophila melanogaster (Fruit fly) protein is Circadian clock-controlled protein daywake.